The chain runs to 928 residues: Protein ARABIDILLO 2 (928 aa).

The Nuclear localization signal signature appears at 3–8; the sequence is RRVRQR. One can recognise an F-box domain in the interval 37–83; it reads YVNWTSLPYDTVFHLFTRLNYRDRASLASTCRTWRSLGASSFLWSSL. ARM repeat units follow at residues 147 to 186, 237 to 278, 303 to 341, 370 to 409, 419 to 458, 460 to 499, 501 to 543, 545 to 585, 591 to 630, 632 to 674, 676 to 715, 717 to 757, and 824 to 864; these read AARH…KLRV, TSNI…KSSQ, KGKV…DLIR, SQGL…TFIV, CGRA…NLSV, AKVA…NLSV, EEHK…NLAA, DKCS…NLAA, GNNA…NLAF, DKNR…GLSV, EANS…NLSF, PGNA…YMFD, and IPEA…QFTI.

This sequence belongs to the beta-catenin family. Expressed ubiquitously.

It localises to the nucleus. Its function is as follows. Promotes lateral root initiation and development, independently of auxin (IAA) and abscisis acid (ABA). The polypeptide is Protein ARABIDILLO 2 (Arabidopsis thaliana (Mouse-ear cress)).